Consider the following 447-residue polypeptide: UDP-N-acetylmuramoylalanine--D-glutamate ligase (447 aa).

An ATP-binding site is contributed by 130-136 (GTSGKTT).

The protein belongs to the MurCDEF family.

The protein localises to the cytoplasm. The enzyme catalyses UDP-N-acetyl-alpha-D-muramoyl-L-alanine + D-glutamate + ATP = UDP-N-acetyl-alpha-D-muramoyl-L-alanyl-D-glutamate + ADP + phosphate + H(+). Its pathway is cell wall biogenesis; peptidoglycan biosynthesis. Cell wall formation. Catalyzes the addition of glutamate to the nucleotide precursor UDP-N-acetylmuramoyl-L-alanine (UMA). This is UDP-N-acetylmuramoylalanine--D-glutamate ligase from Oleidesulfovibrio alaskensis (strain ATCC BAA-1058 / DSM 17464 / G20) (Desulfovibrio alaskensis).